The chain runs to 165 residues: Transcription antitermination protein NusB (165 aa).

Residues 139–165 (EAVRSHRRNKRPAADKPVATDKPAAAE) are disordered.

The protein belongs to the NusB family.

In terms of biological role, involved in transcription antitermination. Required for transcription of ribosomal RNA (rRNA) genes. Binds specifically to the boxA antiterminator sequence of the ribosomal RNA (rrn) operons. The protein is Transcription antitermination protein NusB of Laribacter hongkongensis (strain HLHK9).